Consider the following 282-residue polypeptide: MEGKAYALASGTIINAIATGKGSAFGLDLKVYAKVKLIDDGKNKIEGKVLDNPNIKPNLIVRCVKNTLDYFGLNYSAYVETKTEIPIKSGLSSSSATSNAVVLATFDALGEKIDDELILNLGIKSSFDEKLTVTGAYDDATASYYGGITITDNIERKILKRDKMRDDLNVLILIPNLEKNVDVNRMKLIKDYVEIAFNEAINGNYFKALFLNGILYASALNFPTNIAIDALDAGAITAGLSGTGPSYIAMVEDENVEKVKEKLNRYGKVILTKPNNDGASIY.

Position 86–96 (Pro86–Ala96) interacts with ATP.

Belongs to the GHMP kinase family. Archaeal shikimate kinase subfamily.

The protein localises to the cytoplasm. The enzyme catalyses shikimate + ATP = 3-phosphoshikimate + ADP + H(+). It participates in metabolic intermediate biosynthesis; chorismate biosynthesis; chorismate from D-erythrose 4-phosphate and phosphoenolpyruvate: step 5/7. This Methanocaldococcus jannaschii (strain ATCC 43067 / DSM 2661 / JAL-1 / JCM 10045 / NBRC 100440) (Methanococcus jannaschii) protein is Shikimate kinase (aroK).